A 102-amino-acid polypeptide reads, in one-letter code: RNA-binding protein Hfq (102 aa).

The Sm domain occupies 9–68; it reads DPFLNALRRERVPVSIYLVNGIKLQGQIESFDQFVILLKNTVSQMVYKHAISTVVPSRPV. The interval 63-102 is disordered; it reads VPSRPVSHHSNNAGGGSNNYHHSNNAQPSSAASQDSEDAE. Residues 70–96 are compositionally biased toward low complexity; the sequence is HHSNNAGGGSNNYHHSNNAQPSSAASQ.

The protein belongs to the Hfq family. Homohexamer.

Its function is as follows. RNA chaperone that binds small regulatory RNA (sRNAs) and mRNAs to facilitate mRNA translational regulation in response to envelope stress, environmental stress and changes in metabolite concentrations. Also binds with high specificity to tRNAs. This chain is RNA-binding protein Hfq, found in Cronobacter sakazakii (strain ATCC BAA-894) (Enterobacter sakazakii).